The sequence spans 141 residues: Nucleoside triphosphatase NudI (141 aa).

The Nudix hydrolase domain maps to 1–141 (MRQRTIVCPL…RHTLALKGLL (141 aa)). Positions 38–59 (GGVEPGERIEEALRREVREELG) match the Nudix box motif.

Belongs to the Nudix hydrolase family. NudI subfamily. Monomer. The cofactor is Mg(2+).

It carries out the reaction a ribonucleoside 5'-triphosphate + H2O = a ribonucleoside 5'-phosphate + diphosphate + H(+). The catalysed reaction is a 2'-deoxyribonucleoside 5'-triphosphate + H2O = a 2'-deoxyribonucleoside 5'-phosphate + diphosphate + H(+). It catalyses the reaction dUTP + H2O = dUMP + diphosphate + H(+). The enzyme catalyses dTTP + H2O = dTMP + diphosphate + H(+). It carries out the reaction dCTP + H2O = dCMP + diphosphate + H(+). Catalyzes the hydrolysis of nucleoside triphosphates, with a preference for pyrimidine deoxynucleoside triphosphates (dUTP, dTTP and dCTP). This is Nucleoside triphosphatase NudI from Salmonella agona (strain SL483).